The chain runs to 194 residues: Ras-related protein RabU (194 aa).

19-27 (GYDYECGIK) provides a ligand contact to GTP. The Effector region signature appears at 42–50 (PESQVGVDF). GTP contacts are provided by residues 68–72 (PQNKY) and 130–133 (NNSE).

This sequence belongs to the small GTPase superfamily. Rab family.

The protein is Ras-related protein RabU (rabU) of Dictyostelium discoideum (Social amoeba).